The following is a 295-amino-acid chain: Glycine--tRNA ligase alpha subunit (295 aa).

Belongs to the class-II aminoacyl-tRNA synthetase family. As to quaternary structure, tetramer of two alpha and two beta subunits.

Its subcellular location is the cytoplasm. The catalysed reaction is tRNA(Gly) + glycine + ATP = glycyl-tRNA(Gly) + AMP + diphosphate. This chain is Glycine--tRNA ligase alpha subunit, found in Desulforamulus reducens (strain ATCC BAA-1160 / DSM 100696 / MI-1) (Desulfotomaculum reducens).